The sequence spans 299 residues: Zeta-sarcoglycan (299 aa).

Residues 1–37 (MTREQYILATQQNNLPRTENAQLYPVGIYGWRKRCLY) lie on the Cytoplasmic side of the membrane. Residues 38 to 58 (FFVLLLLVTMIVNLAMTIWIL) traverse the membrane as a helical; Signal-anchor for type II membrane protein segment. Topologically, residues 59-299 (KVMNFTVDGM…QSSSNICLWS (241 aa)) are extracellular. 2 N-linked (GlcNAc...) asparagine glycosylation sites follow: Asn-62 and Asn-110. The cysteines at positions 273 and 289 are disulfide-linked.

The protein belongs to the sarcoglycan beta/delta/gamma/zeta family.

It is found in the cell membrane. It localises to the sarcolemma. Its subcellular location is the cytoplasm. The protein resides in the cytoskeleton. Component of the sarcoglycan complex, a subcomplex of the dystrophin-glycoprotein complex which forms a link between the F-actin cytoskeleton and the extracellular matrix. May play a role in the maintenance of striated muscle membrane stability. The sequence is that of Zeta-sarcoglycan (SGCZ) from Homo sapiens (Human).